Here is an 826-residue protein sequence, read N- to C-terminus: BLOC-2 complex member HPS5 homolog (826 aa).

3 WD repeats span residues 22–61 (KHHN…LLLI), 63–102 (NKHG…QATP), and 110–149 (DQSV…GHSL). Residues 422–446 (ALDTHSSGGSSATTERSLSGGSSSR) show a composition bias toward polar residues. Positions 422 to 447 (ALDTHSSGGSSATTERSLSGGSSSRA) are disordered.

This sequence belongs to the HPS5 family. As to expression, expressed in eye pigment granules.

In terms of biological role, has a role in the biogenesis of eye pigment granules. Eye pigment granules are specialized forms of late endosomes or lysosomes. Biogenesis of pigment granules in the eye requires molecular components required for protein delivery to lysosomes. This Drosophila melanogaster (Fruit fly) protein is BLOC-2 complex member HPS5 homolog.